The chain runs to 150 residues: D-aminoacyl-tRNA deacylase (150 aa).

The Gly-cisPro motif, important for rejection of L-amino acids signature appears at 136–137; that stretch reads GP.

It belongs to the DTD family. In terms of assembly, homodimer.

The protein localises to the cytoplasm. It carries out the reaction glycyl-tRNA(Ala) + H2O = tRNA(Ala) + glycine + H(+). The catalysed reaction is a D-aminoacyl-tRNA + H2O = a tRNA + a D-alpha-amino acid + H(+). Its function is as follows. An aminoacyl-tRNA editing enzyme that deacylates mischarged D-aminoacyl-tRNAs. Also deacylates mischarged glycyl-tRNA(Ala), protecting cells against glycine mischarging by AlaRS. Acts via tRNA-based rather than protein-based catalysis; rejects L-amino acids rather than detecting D-amino acids in the active site. By recycling D-aminoacyl-tRNA to D-amino acids and free tRNA molecules, this enzyme counteracts the toxicity associated with the formation of D-aminoacyl-tRNA entities in vivo and helps enforce protein L-homochirality. This Staphylococcus saprophyticus subsp. saprophyticus (strain ATCC 15305 / DSM 20229 / NCIMB 8711 / NCTC 7292 / S-41) protein is D-aminoacyl-tRNA deacylase.